Here is a 149-residue protein sequence, read N- to C-terminus: Large ribosomal subunit protein uL22 (149 aa).

Belongs to the universal ribosomal protein uL22 family. As to quaternary structure, part of the 50S ribosomal subunit.

This protein binds specifically to 23S rRNA; its binding is stimulated by other ribosomal proteins, e.g. L4, L17, and L20. It is important during the early stages of 50S assembly. It makes multiple contacts with different domains of the 23S rRNA in the assembled 50S subunit and ribosome. In terms of biological role, the globular domain of the protein is located near the polypeptide exit tunnel on the outside of the subunit, while an extended beta-hairpin is found that lines the wall of the exit tunnel in the center of the 70S ribosome. This Petrotoga mobilis (strain DSM 10674 / SJ95) protein is Large ribosomal subunit protein uL22.